The following is a 305-amino-acid chain: MEEKFRNCILGLAVGDALGMPVEGLSIENIRQLYGEVRDFLPSPYGDLNAGEWTDDTEQMVVLAESILETVYFDPENFAERLKRWFLETNSRRIGPSSTKAISNLMRGVHWTRAGVFSDTCGAAMRVAPIGLVYHFSLNLVERYAEISARVTHTGTAAIGGAVAVAVAIACNVLDFSDEEMLEEVLRRVEAYDNLLAEKIRYANEISDRDVEYAVEKLGNSISSLDVVPMAFYSYFAGKDFEESLIKAVNAGGDADSIAAICGAIKGAKGFAIPERWLEGLKDREFLEELATKLYELHMRIVKLT.

The protein belongs to the ADP-ribosylglycohydrolase family.

This is an uncharacterized protein from Archaeoglobus fulgidus (strain ATCC 49558 / DSM 4304 / JCM 9628 / NBRC 100126 / VC-16).